The primary structure comprises 273 residues: Dermonecrotic toxin LapSicTox-alphaIB1b2 (273 aa).

Residue histidine 5 is part of the active site. Mg(2+) is bound by residues glutamate 25 and aspartate 27. Histidine 41 serves as the catalytic Nucleophile. Intrachain disulfides connect cysteine 45–cysteine 51 and cysteine 47–cysteine 190. Aspartate 85 lines the Mg(2+) pocket. N-linked (GlcNAc...) asparagine glycosylation occurs at asparagine 250.

It belongs to the arthropod phospholipase D family. Class II subfamily. Mg(2+) is required as a cofactor. In terms of tissue distribution, expressed by the venom gland.

The protein localises to the secreted. The catalysed reaction is an N-(acyl)-sphingosylphosphocholine = an N-(acyl)-sphingosyl-1,3-cyclic phosphate + choline. It carries out the reaction an N-(acyl)-sphingosylphosphoethanolamine = an N-(acyl)-sphingosyl-1,3-cyclic phosphate + ethanolamine. It catalyses the reaction a 1-acyl-sn-glycero-3-phosphocholine = a 1-acyl-sn-glycero-2,3-cyclic phosphate + choline. The enzyme catalyses a 1-acyl-sn-glycero-3-phosphoethanolamine = a 1-acyl-sn-glycero-2,3-cyclic phosphate + ethanolamine. Its function is as follows. Dermonecrotic toxins cleave the phosphodiester linkage between the phosphate and headgroup of certain phospholipids (sphingolipid and lysolipid substrates), forming an alcohol (often choline) and a cyclic phosphate. This toxin acts on sphingomyelin (SM). It may also act on ceramide phosphoethanolamine (CPE), lysophosphatidylcholine (LPC) and lysophosphatidylethanolamine (LPE), but not on lysophosphatidylserine (LPS), and lysophosphatidylglycerol (LPG). It acts by transphosphatidylation, releasing exclusively cyclic phosphate products as second products. Induces dermonecrosis, hemolysis, increased vascular permeability, edema, inflammatory response, and platelet aggregation. This chain is Dermonecrotic toxin LapSicTox-alphaIB1b2, found in Loxosceles apachea (Apache recluse spider).